The following is a 24-amino-acid chain: Unknown protein 3 (24 aa).

The protein is Unknown protein 3 of Pseudotsuga menziesii (Douglas-fir).